Here is a 524-residue protein sequence, read N- to C-terminus: Cytokinin dehydrogenase 4 (524 aa).

The signal sequence occupies residues 1–26; sequence MTNTLCLSLITLITLFISLTPTLIKS. Residues Asn39 and Asn58 are each glycosylated (N-linked (GlcNAc...) asparagine). The FAD-binding PCMH-type domain occupies 60 to 249; it reads TDENPGAVLC…TRARIALDHA (190 aa). FAD-binding residues include Ala104, Gly106, and Gly108. Position 109 is a pros-8alpha-FAD histidine (His109). FAD-binding residues include Ser110 and Gln114. N-linked (GlcNAc...) asparagine glycosylation occurs at Asn124. Asp173, Ser178, Ser184, Ile188, and Ile239 together coordinate FAD. Asn411 carries N-linked (GlcNAc...) asparagine glycosylation. Residues Tyr482, Ser517, and Gln520 each coordinate FAD.

Belongs to the oxygen-dependent FAD-linked oxidoreductase family. It depends on FAD as a cofactor. In terms of tissue distribution, expressed in trichomes and in developing stomata of young growing leaves. Strong expression in stipules and in the root cap, but not detected in the root meristem.

The protein localises to the secreted. It localises to the extracellular space. It catalyses the reaction N(6)-dimethylallyladenine + A + H2O = 3-methyl-2-butenal + adenine + AH2. Its function is as follows. Catalyzes the oxidation of cytokinins, a family of N(6)-substituted adenine derivatives that are plant hormones, where the substituent is an isopentenyl group. This is Cytokinin dehydrogenase 4 (CKX4) from Arabidopsis thaliana (Mouse-ear cress).